Here is a 399-residue protein sequence, read N- to C-terminus: Dual-specificity RNA methyltransferase RlmN (399 aa).

Catalysis depends on Glu121, which acts as the Proton acceptor. A Radical SAM core domain is found at 127-376; sequence DVDRGTLCVS…VRTPRGRDIL (250 aa). Cysteines 134 and 379 form a disulfide. Positions 141, 145, and 148 each coordinate [4Fe-4S] cluster. Residues 205–206, Ser237, 259–261, and Asn336 contribute to the S-adenosyl-L-methionine site; these read GE and SLH. The S-methylcysteine intermediate role is filled by Cys379.

Belongs to the radical SAM superfamily. RlmN family. Requires [4Fe-4S] cluster as cofactor.

The protein resides in the cytoplasm. The enzyme catalyses adenosine(2503) in 23S rRNA + 2 reduced [2Fe-2S]-[ferredoxin] + 2 S-adenosyl-L-methionine = 2-methyladenosine(2503) in 23S rRNA + 5'-deoxyadenosine + L-methionine + 2 oxidized [2Fe-2S]-[ferredoxin] + S-adenosyl-L-homocysteine. The catalysed reaction is adenosine(37) in tRNA + 2 reduced [2Fe-2S]-[ferredoxin] + 2 S-adenosyl-L-methionine = 2-methyladenosine(37) in tRNA + 5'-deoxyadenosine + L-methionine + 2 oxidized [2Fe-2S]-[ferredoxin] + S-adenosyl-L-homocysteine. In terms of biological role, specifically methylates position 2 of adenine 2503 in 23S rRNA and position 2 of adenine 37 in tRNAs. m2A2503 modification seems to play a crucial role in the proofreading step occurring at the peptidyl transferase center and thus would serve to optimize ribosomal fidelity. The sequence is that of Dual-specificity RNA methyltransferase RlmN from Methylocella silvestris (strain DSM 15510 / CIP 108128 / LMG 27833 / NCIMB 13906 / BL2).